The following is a 487-amino-acid chain: MKIKAQIGMVMNLDKCIGCHTCSVTCKNTWTNRSGAEYMYFNNVETKPGIGYPKQWEDQDKYKGGWTLKKGKLELKSGSKTNRLAGLFYNPNQPSIDDYYEPWNYDYETLTNSPQKKHQPVARPKSSLTGDFMNIEWGPNWEDDLAGGHITGLEDPNVQKMEESIKTEFDDVFMMYLPRICEHCINPACVSSCPSGAMYKREEDGIVLVDQNACRSWRYCVSSCPYKKVYFNWQTNKAEKCTLCFPRLEAGLPTICSETCVGRIRYLGVMLYDADKVEEAASVENEKDLYHSQLDVFLDPNDPEVAKLAKEQGIPAEWIEAAQQSPIYKMIIDWKIALPLHPEYRTLPMVWYIPPLSPIMNLFEGKGSRQTAEDIFPAIDQMRIPIDYLAQLLTAGDTDHIRSTLKKMSVMRQYMRAVQTNKSIDPELISSVGLTEQQIEDMYRLLAIAKYDDRFVIPSSHREEVSDLYAEQGSCGLSFSGGPGSCF.

4Fe-4S ferredoxin-type domains lie at 7-36 (IGMV…RSGA), 172-203 (VFMM…KREE), and 205-234 (GIVL…FNWQ). Residues Cys-16, Cys-19, Cys-22, Cys-26, Cys-181, Cys-184, and Cys-189 each coordinate [4Fe-4S] cluster. Residues Cys-193, Cys-214, and Cys-220 each contribute to the [3Fe-4S] cluster site. [4Fe-4S] cluster contacts are provided by Cys-224, Cys-241, Cys-244, Cys-256, and Cys-260.

[4Fe-4S] cluster serves as cofactor. It depends on [3Fe-4S] cluster as a cofactor.

It localises to the cell membrane. The catalysed reaction is nitrate + a quinol = a quinone + nitrite + H2O. The beta chain is an electron transfer unit containing four cysteine clusters involved in the formation of iron-sulfur centers. Electrons are transferred from the gamma chain to the molybdenum cofactor of the alpha subunit. This is Nitrate reductase beta chain (narH) from Bacillus subtilis (strain 168).